A 319-amino-acid polypeptide reads, in one-letter code: Annexin A4 (319 aa).

At T7 the chain carries Phosphothreonine. A Phosphoserine modification is found at S12. 4 Annexin repeats span residues 14–85, 86–157, 169–241, and 245–316; these read FNAT…GMMT, PTVL…SLTA, ALVR…AIVK, and NKPA…ILCG. Residues K213, K293, and K300 each carry the N6-acetyllysine modification.

The protein belongs to the annexin family.

Its subcellular location is the zymogen granule membrane. Functionally, calcium/phospholipid-binding protein which promotes membrane fusion and is involved in exocytosis. This Rattus norvegicus (Rat) protein is Annexin A4 (Anxa4).